We begin with the raw amino-acid sequence, 61 residues long: Small ribosomal subunit protein uS14 (61 aa).

Zn(2+) contacts are provided by Cys24, Cys27, Cys40, and Cys43.

It belongs to the universal ribosomal protein uS14 family. Zinc-binding uS14 subfamily. As to quaternary structure, part of the 30S ribosomal subunit. Contacts proteins S3 and S10. Zn(2+) is required as a cofactor.

In terms of biological role, binds 16S rRNA, required for the assembly of 30S particles and may also be responsible for determining the conformation of the 16S rRNA at the A site. The sequence is that of Small ribosomal subunit protein uS14 from Halothermothrix orenii (strain H 168 / OCM 544 / DSM 9562).